The sequence spans 546 residues: Chaperonin GroEL (546 aa).

ATP-binding positions include 29–32, Lys-50, 86–90, Gly-414, 477–479, and Asp-493; these read TLGP, DGTTT, and NAA.

Belongs to the chaperonin (HSP60) family. Forms a cylinder of 14 subunits composed of two heptameric rings stacked back-to-back. Interacts with the co-chaperonin GroES.

It is found in the cytoplasm. The enzyme catalyses ATP + H2O + a folded polypeptide = ADP + phosphate + an unfolded polypeptide.. Its function is as follows. Together with its co-chaperonin GroES, plays an essential role in assisting protein folding. The GroEL-GroES system forms a nano-cage that allows encapsulation of the non-native substrate proteins and provides a physical environment optimized to promote and accelerate protein folding. This Geobacter metallireducens (strain ATCC 53774 / DSM 7210 / GS-15) protein is Chaperonin GroEL.